The primary structure comprises 166 residues: Fer3-like protein (166 aa).

Residues 57-88 (FEEGDPEEEECEVDQGDGEEEEEEERGRGVSL) are disordered. A compositionally biased stretch (acidic residues) spans 60-80 (GDPEEEECEVDQGDGEEEEEE). Positions 101-153 (AQRQAANIRERKRMFNLNEAFDQLRRKVPTFAYEKRLSRIETLRLAIVYISFM) constitute a bHLH domain.

In terms of assembly, heterodimer with TCF3/E12. Interacts with the bHLH domain of TCF3/E12.

The protein localises to the nucleus. Transcription factor that binds to the E-box and functions as inhibitor of transcription. DNA binding requires dimerization with an E protein. Inhibits transcription activation by ASCL1/MASH1 by sequestering E proteins. This chain is Fer3-like protein (FERD3L), found in Homo sapiens (Human).